A 745-amino-acid chain; its full sequence is Mediator of RNA polymerase II transcription subunit 25 (745 aa).

The tract at residues 1–226 (MVPGSEGPAR…PRHMVLVRGL (226 aa)) is interaction with the Mediator complex. Positions 233-243 (SSTSGSLQTKQ) are enriched in polar residues. Disordered stretches follow at residues 233-266 (SSTS…QALP) and 299-374 (LGPR…VTPG). A compositionally biased stretch (low complexity) spans 252-262 (ASAATLSAAPP). A compositionally biased stretch (pro residues) spans 324–342 (PAPPLAPVPPGAPKPPPAS). The interval 389–543 (LGGQQSVSNK…VNGIRQVITN (155 aa)) is interaction with VP16. The interaction with CREBBP stretch occupies residues 395–545 (VSNKLLAWSG…GIRQVITNHK (151 aa)). Interaction with RARA regions lie at residues 563–652 (APPV…LLNP) and 639–705 (PGAN…WPTQ). The tract at residues 584-738 (LRAPQPQPQG…PGLQPSVMED (155 aa)) is disordered. The span at 596–617 (GASAATGQPQPQGATQAPTGAP) shows a compositional bias: low complexity. Residues 618–631 (QGPPGAAPGPPPSG) are compositionally biased toward pro residues. The LXXLL motif signature appears at 645 to 649 (LRSLL). Pro residues predominate over residues 652–663 (PAPPQTGVPPPQ). An Asymmetric dimethylarginine modification is found at R723.

The protein belongs to the Mediator complex subunit 25 family. In terms of assembly, component of the Mediator complex, which is composed of MED1, MED4, MED6, MED7, MED8, MED9, MED10, MED11, MED12, MED13, MED13L, MED14, MED15, MED16, MED17, MED18, MED19, MED20, MED21, MED22, MED23, MED24, MED25, MED26, MED27, MED29, MED30, MED31, CCNC, CDK8 and CDC2L6/CDK11. The MED12, MED13, CCNC and CDK8 subunits form a distinct module termed the CDK8 module. Mediator containing the CDK8 module is less active than Mediator lacking this module in supporting transcriptional activation. Individual preparations of the Mediator complex lacking one or more distinct subunits have been variously termed ARC, CRSP, DRIP, PC2, SMCC and TRAP. Interacts with CREBBP. Interacts with ESR1, GR and THRB in a ligand-dependent fashion. Binds the Herpes simplex virus activator VP16. Interacts with RARA and RXRA in a ligand-dependent fashion.

It is found in the nucleus. In terms of biological role, component of the Mediator complex, a coactivator involved in the regulated transcription of nearly all RNA polymerase II-dependent genes. Mediator functions as a bridge to convey information from gene-specific regulatory proteins to the basal RNA polymerase II transcription machinery. Mediator is recruited to promoters by direct interactions with regulatory proteins and serves as a scaffold for the assembly of a functional preinitiation complex with RNA polymerase II and the general transcription factors. Required for RARA/RXRA-mediated transcription. The protein is Mediator of RNA polymerase II transcription subunit 25 (Med25) of Mus musculus (Mouse).